A 542-amino-acid polypeptide reads, in one-letter code: Apolipoprotein N-acyltransferase (542 aa).

Transmembrane regions (helical) follow at residues 26–46 (ASVI…LSLV), 54–74 (IWCL…SWML), 89–109 (LLIS…VLCF), 113–133 (YWGA…VRYY), 163–183 (WAGQ…VLVF), and 187–207 (FSYG…GTYY). The CN hydrolase domain maps to 220–499 (LRVAIVQPGY…PDVLQVSVPV (280 aa)). Catalysis depends on Glu264, which acts as the Proton acceptor. Lys349 is a catalytic residue. The active-site Nucleophile is Cys404. A helical membrane pass occupies residues 509–529 (FGDAPLLFVAVSSVLGVVGYF).

It belongs to the CN hydrolase family. Apolipoprotein N-acyltransferase subfamily.

The protein localises to the cell inner membrane. The catalysed reaction is N-terminal S-1,2-diacyl-sn-glyceryl-L-cysteinyl-[lipoprotein] + a glycerophospholipid = N-acyl-S-1,2-diacyl-sn-glyceryl-L-cysteinyl-[lipoprotein] + a 2-acyl-sn-glycero-3-phospholipid + H(+). It participates in protein modification; lipoprotein biosynthesis (N-acyl transfer). In terms of biological role, catalyzes the phospholipid dependent N-acylation of the N-terminal cysteine of apolipoprotein, the last step in lipoprotein maturation. The sequence is that of Apolipoprotein N-acyltransferase from Chlamydia muridarum (strain MoPn / Nigg).